The sequence spans 130 residues: Protein ApaG (130 aa).

An ApaG domain is found at 3 to 127 (RAVTRNIEVQ…FSLDLPGTRR (125 aa)).

This is Protein ApaG from Mesorhizobium japonicum (strain LMG 29417 / CECT 9101 / MAFF 303099) (Mesorhizobium loti (strain MAFF 303099)).